The chain runs to 303 residues: UDP-3-O-acyl-N-acetylglucosamine deacetylase (303 aa).

His-78, His-237, and Asp-241 together coordinate Zn(2+). His-264 serves as the catalytic Proton donor.

It belongs to the LpxC family. The cofactor is Zn(2+).

The catalysed reaction is a UDP-3-O-[(3R)-3-hydroxyacyl]-N-acetyl-alpha-D-glucosamine + H2O = a UDP-3-O-[(3R)-3-hydroxyacyl]-alpha-D-glucosamine + acetate. Its pathway is glycolipid biosynthesis; lipid IV(A) biosynthesis; lipid IV(A) from (3R)-3-hydroxytetradecanoyl-[acyl-carrier-protein] and UDP-N-acetyl-alpha-D-glucosamine: step 2/6. In terms of biological role, catalyzes the hydrolysis of UDP-3-O-myristoyl-N-acetylglucosamine to form UDP-3-O-myristoylglucosamine and acetate, the committed step in lipid A biosynthesis. The polypeptide is UDP-3-O-acyl-N-acetylglucosamine deacetylase (Teredinibacter turnerae (strain ATCC 39867 / T7901)).